The sequence spans 206 residues: Large ribosomal subunit protein mL62 (206 aa).

The transit peptide at 1 to 29 (MATAWCLPWTLRRAGAWLLTPPLRCPRRA) directs the protein to the mitochondrion.

This sequence belongs to the prokaryotic/mitochondrial release factor family. Mitochondrion-specific ribosomal protein mL62 subfamily. As to quaternary structure, component of the mitochondrial 39S ribosomal subunit.

Its subcellular location is the mitochondrion. The enzyme catalyses an N-acyl-L-alpha-aminoacyl-tRNA + H2O = an N-acyl-L-amino acid + a tRNA + H(+). Functionally, essential peptidyl-tRNA hydrolase component of the mitochondrial large ribosomal subunit. Acts as a codon-independent translation release factor that has lost all stop codon specificity and directs the termination of translation in mitochondrion, possibly in case of abortive elongation. May be involved in the hydrolysis of peptidyl-tRNAs that have been prematurely terminated and thus in the recycling of stalled mitochondrial ribosomes. This chain is Large ribosomal subunit protein mL62, found in Ailuropoda melanoleuca (Giant panda).